We begin with the raw amino-acid sequence, 306 residues long: Recombination-associated protein RdgC (306 aa).

Belongs to the RdgC family.

It is found in the cytoplasm. The protein resides in the nucleoid. In terms of biological role, may be involved in recombination. The protein is Recombination-associated protein RdgC of Pseudomonas aeruginosa (strain ATCC 15692 / DSM 22644 / CIP 104116 / JCM 14847 / LMG 12228 / 1C / PRS 101 / PAO1).